The sequence spans 1158 residues: Transient receptor potential cation channel subfamily M member 5 (1158 aa).

Over 1-729 (MQTTQSSCPG…LTRWRKFWGA (729 aa)) the chain is Cytoplasmic. A Phosphoserine; by PKC modification is found at serine 129. Residues cysteine 341, aspartate 350, aspartate 353, and glutamate 354 each coordinate Ca(2+). The tract at residues 488 to 507 (GRRMEERGPPKRPAGQKWLP) is disordered. Residues 552–572 (KIIKEMSHLEKEAEVARTMRE) adopt a coiled-coil conformation. Residues 730–754 (PVTVFLGNVVMYFAFLFLFTYVLLV) form a helical membrane-spanning segment. Residues 755–764 (DFRPPPQGPS) lie on the Extracellular side of the membrane. Residues 765 to 784 (GSEVTLYFWVFTLVLEEIRQ) form a helical membrane-spanning segment. Ca(2+)-binding residues include glutamate 781 and glutamine 784. Topologically, residues 785-805 (GFFTDEDTHLVKKFTLYVEDN) are cytoplasmic. The chain crosses the membrane as a helical span at residues 806 to 824 (WNKCDMVAIFLFIVGVTCR). Positions 807 and 810 each coordinate Ca(2+). Topologically, residues 825 to 831 (MVPSVFE) are extracellular. Residues 832-854 (AGRTVLAIDFMVFTLRLIHIFAI) traverse the membrane as a helical segment. The Cytoplasmic segment spans residues 855–863 (HKQLGPKII). A helical transmembrane segment spans residues 864–893 (IVERMMKDVFFFLFFLSVWLVAYGVTTQAL). Residues 894-902 (LHPHDGRLE) are Extracellular-facing. The segment at residues 903–938 (WIFRRVLYRPYLQIFGQIPLDEIDEARVNCSLHPLL) is an intramembrane region (pore-forming). The Selectivity filter signature appears at 917–919 (FGQ). Over 939–950 (LESSASCPNLYA) the chain is Extracellular. The chain crosses the membrane as a helical span at residues 951 to 985 (NWLVILLLVTFLLVTNVLLMNLLIAMFSYTFQVVQ). Topologically, residues 986-1158 (GNADMFWKFQ…LESGLPPSDT (173 aa)) are cytoplasmic. Glutamate 1002 is a Ca(2+) binding site. The segment covering 1127–1141 (TYSSSQNCGCRSQPA) has biased composition (polar residues). The tract at residues 1127–1158 (TYSSSQNCGCRSQPASARDREYLESGLPPSDT) is disordered.

It belongs to the transient receptor (TC 1.A.4) family. LTrpC subfamily. TRPM5 sub-subfamily. In terms of assembly, homotetramer. Post-translationally, multiple phosphorylation sites regulate the Gq/ TRPM5 modulation axis, with the Ser-129 playing a substantial role in this positive modulation. Strongly expressed in liver, heart, testis, brain and kidney. Detected in fetal liver, kidney, spleen, brain, heart and lung, and in adult skin, eyes, spleen, stomach, small intestine, colon, lung, bladder, pancreas and thymus. Biallelically expressed at all stages and tissues examined. Also expressed in subsets of taste receptor cells of the tongue, in olfactory sensory neurons of the main olfactory epithelium and in the vomeronasal organ.

It is found in the cell membrane. The catalysed reaction is Na(+)(in) = Na(+)(out). The enzyme catalyses K(+)(in) = K(+)(out). With respect to regulation, ca(2+)-activated cation channel. Displays voltage dependence modulation. Regulated by PI(4,5)P2 levels. PI(4,5)P 2 reverses the Ca(2+) -induced desensitization of channels. Inhibited by flufenamic acid with an IC(50) of 24.5 uM and spermine with an IC(50) of 37 uM. Is a highly temperature-sensitive, heat activated channel showing a steep increase of inward currents at temperatures between 15 and 35 degrees Celsius. Heat activation is due to a shift of the voltage-dependent activation curve to negative potentials. The channel is blocked by extracellular acidification. Functionally, monovalent cation-selective ion channel activated by intracellular Ca(2+) in a voltage- and temperature-dependent manner. Mediates the transport of Na(+), K(+) and Cs(+) ions equally well. Activated directly by increase in intracellular Ca(2+), but is impermeable to it. The activation mechanism of TRPM5 involves a multistep process. TRPM5 activation involves ligand binding (i.e., tastant molecule, glucose stimulation) to Gq/G-protein coupled receptors (GPCR) and leads to the breakdown of phosphatidylinositol bisphosphate (PIP2) into diacylglycerol (DAG) and inositol trisphosphate (IP3), IP3 binds to its receptors in the endoplasmic reticulum and cause Ca(2+) release. Simultaneously with the intracellular Ca(2+) release, DAG activates the protein kinase C (PKC), which phosphorylates the TRPM5 channel. This phosphorylation combined with the bound Ca(2+), leads to a robust inward current allowing the entry of sodium ions (Na+) into the cell. This ion influx depolarizes the cell membrane, generating action potentials that propagate TRPM5 signals. Is a key player in sensing sweet, umami and bitter stimuli. May also be involved in sensing semiochemicals. Involved in insulin secretion by pancreatic beta cells. The polypeptide is Transient receptor potential cation channel subfamily M member 5 (Mus musculus (Mouse)).